Here is a 208-residue protein sequence, read N- to C-terminus: 2-phospho-L-lactate guanylyltransferase (208 aa).

It belongs to the CofC family. Homodimer.

The enzyme catalyses (2S)-2-phospholactate + GTP + H(+) = (2S)-lactyl-2-diphospho-5'-guanosine + diphosphate. It functions in the pathway cofactor biosynthesis; coenzyme F420 biosynthesis. In terms of biological role, guanylyltransferase that catalyzes the activation of (2S)-2-phospholactate (2-PL) as (2S)-lactyl-2-diphospho-5'-guanosine, via the condensation of 2-PL with GTP. It is involved in the biosynthesis of coenzyme F420, a hydride carrier cofactor. The chain is 2-phospho-L-lactate guanylyltransferase from Methanosarcina barkeri (strain Fusaro / DSM 804).